The sequence spans 238 residues: Large ribosomal subunit protein uL1 (238 aa).

Belongs to the universal ribosomal protein uL1 family. As to quaternary structure, part of the 50S ribosomal subunit.

In terms of biological role, binds directly to 23S rRNA. The L1 stalk is quite mobile in the ribosome, and is involved in E site tRNA release. Functionally, protein L1 is also a translational repressor protein, it controls the translation of the L11 operon by binding to its mRNA. The chain is Large ribosomal subunit protein uL1 from Trichodesmium erythraeum (strain IMS101).